The primary structure comprises 380 residues: TPR repeat-containing thioredoxin TDX (380 aa).

Residue V2 is modified to N-acetylvaline. Positions 49-59 (TERDYEDKAET) are enriched in basic and acidic residues. Residues 49 to 115 (TERDYEDKAE…DENRDDAQSE (67 aa)) are disordered. Residues 69 to 91 (DDDDDIMESDVELDNSDVVEPDN) are compositionally biased toward acidic residues. Basic and acidic residues predominate over residues 106-115 (DENRDDAQSE). 3 TPR repeats span residues 112–145 (AQSE…NPTS), 147–179 (ILYA…NSDS), and 181–213 (KGYK…DYDE). Residues 240 to 263 (RKEKELQRAERERRKQQEAQEREA) show a composition bias toward basic and acidic residues. Positions 240–265 (RKEKELQRAERERRKQQEAQEREAQA) are disordered. One can recognise a Thioredoxin domain in the interval 252-378 (RRKQQEAQER…LEQKIAQHSS (127 aa)). Active-site nucleophile residues include C304 and C307. C304 and C307 are oxidised to a cystine.

The protein belongs to the thioredoxin family. Oligomerization under high temperature.

Its function is as follows. Thiol-disulfide oxidoreductase that possesses insulin disulfide bonds reducing activity, disulfide reductase, foldase chaperone and holdase chaperone activities. Heat shock causes oligomerization and formation of high molecular weiht (HMW) complexes with concomitant functional switching from a disulfide reductase and foldase chaperone to a holdase chaperone. May interact with HSP70 proteins through the TPR repeats. This chain is TPR repeat-containing thioredoxin TDX (TDX), found in Arabidopsis thaliana (Mouse-ear cress).